Here is a 141-residue protein sequence, read N- to C-terminus: Nucleoside diphosphate kinase (141 aa).

Residues Lys-11, Phe-59, Arg-87, Thr-93, Arg-104, and Asn-114 each contribute to the ATP site. The active-site Pros-phosphohistidine intermediate is the His-117.

It belongs to the NDK family. Homotetramer. Mg(2+) is required as a cofactor.

It is found in the cytoplasm. The enzyme catalyses a 2'-deoxyribonucleoside 5'-diphosphate + ATP = a 2'-deoxyribonucleoside 5'-triphosphate + ADP. It carries out the reaction a ribonucleoside 5'-diphosphate + ATP = a ribonucleoside 5'-triphosphate + ADP. Functionally, major role in the synthesis of nucleoside triphosphates other than ATP. The ATP gamma phosphate is transferred to the NDP beta phosphate via a ping-pong mechanism, using a phosphorylated active-site intermediate. The chain is Nucleoside diphosphate kinase from Bordetella petrii (strain ATCC BAA-461 / DSM 12804 / CCUG 43448).